The following is a 393-amino-acid chain: Methylthioribose kinase (393 aa).

Residues Asn-38, Lys-53, and 107 to 109 each bind ATP; that span reads EDL. Substrate is bound at residue Asp-225. 242–244 lines the ATP pocket; that stretch reads DPE. Residue Arg-332 participates in substrate binding.

Belongs to the methylthioribose kinase family. As to quaternary structure, homodimer.

The enzyme catalyses 5-(methylsulfanyl)-D-ribose + ATP = 5-(methylsulfanyl)-alpha-D-ribose 1-phosphate + ADP + H(+). Its pathway is amino-acid biosynthesis; L-methionine biosynthesis via salvage pathway; S-methyl-5-thio-alpha-D-ribose 1-phosphate from S-methyl-5'-thioadenosine (hydrolase route): step 2/2. Functionally, catalyzes the phosphorylation of methylthioribose into methylthioribose-1-phosphate. The sequence is that of Methylthioribose kinase from Bacillus cereus (strain ZK / E33L).